The sequence spans 559 residues: Sulfite reductase [NADPH] hemoprotein beta-component (559 aa).

Residues C423, C429, C468, and C472 each coordinate [4Fe-4S] cluster. Siroheme is bound at residue C472.

Belongs to the nitrite and sulfite reductase 4Fe-4S domain family. In terms of assembly, alpha(8)-beta(8). The alpha component is a flavoprotein, the beta component is a hemoprotein. The cofactor is siroheme. Requires [4Fe-4S] cluster as cofactor.

It catalyses the reaction hydrogen sulfide + 3 NADP(+) + 3 H2O = sulfite + 3 NADPH + 4 H(+). It functions in the pathway sulfur metabolism; hydrogen sulfide biosynthesis; hydrogen sulfide from sulfite (NADPH route): step 1/1. Functionally, component of the sulfite reductase complex that catalyzes the 6-electron reduction of sulfite to sulfide. This is one of several activities required for the biosynthesis of L-cysteine from sulfate. The protein is Sulfite reductase [NADPH] hemoprotein beta-component of Thiocapsa roseopersicina.